Here is a 354-residue protein sequence, read N- to C-terminus: NADH-quinone oxidoreductase subunit H (354 aa).

The next 8 helical transmembrane spans lie at 22-42 (ILIRAVIIVVPLLLCVAYLIL), 91-111 (YLIAPLMVLMPAVAVWAVIPF), 124-144 (LLYVMAISSVGVYGVILAGWA), 168-188 (MGFALVTVLMVAGSLNLSAIV), 203-223 (ILSWNWLPLLPMFGVYFISGV), 255-275 (LFFLAEYINMIIISTMTALMF), 291-311 (IPGFFWLVIKVFLLLSVFIWI), and 326-346 (LGWKVFIPLTVAWLIIVAIWI).

It belongs to the complex I subunit 1 family. As to quaternary structure, NDH-1 is composed of 14 different subunits. Subunits NuoA, H, J, K, L, M, N constitute the membrane sector of the complex.

It localises to the cell inner membrane. The catalysed reaction is a quinone + NADH + 5 H(+)(in) = a quinol + NAD(+) + 4 H(+)(out). In terms of biological role, NDH-1 shuttles electrons from NADH, via FMN and iron-sulfur (Fe-S) centers, to quinones in the respiratory chain. The immediate electron acceptor for the enzyme in this species is believed to be ubiquinone. Couples the redox reaction to proton translocation (for every two electrons transferred, four hydrogen ions are translocated across the cytoplasmic membrane), and thus conserves the redox energy in a proton gradient. This subunit may bind ubiquinone. The sequence is that of NADH-quinone oxidoreductase subunit H from Cupriavidus necator (strain ATCC 17699 / DSM 428 / KCTC 22496 / NCIMB 10442 / H16 / Stanier 337) (Ralstonia eutropha).